The primary structure comprises 407 residues: MNKLNKVILAYSGGLDTSIIIPWLKENYNCEVIAVCGNVGQKDELDGLEEKAIKTGASKLYIEDLTKEFVEDYIFPTIQAGAIYEGKYLLGTSFARPLIGKRLVEIAKAEGADAICHGCTGKGNDQVRFELAVKAFDPDMKIIAPWRIWDIKSREDEIAYAEARNVPIKINHETNYSKDKNIWHLSHEGLDLEDPKNEPKYDEILELSNSLEKAPNEPTYITLTFEKGNAVALNGEKMDAVTLLDELNKIGGKNAIGITDMVENRLVGMKSRGVYETPGGTILYKAHKDLEELCLDKETSHYKEQISLKFADLVYNGLWFTPLREALSEFIKKTQETVTGEIKLKLYKGNIVNAGMTSPYSLYSEEYATFGEDAVYNQNDSAGFITLYGLPTVVKAKMYQSLKKGTK.

10–18 (AYSGGLDTS) is a binding site for ATP. Tyrosine 88 and serine 93 together coordinate L-citrulline. Glycine 118 lines the ATP pocket. Residues threonine 120, asparagine 124, and aspartate 125 each coordinate L-aspartate. Asparagine 124 serves as a coordination point for L-citrulline. L-citrulline-binding residues include arginine 128, serine 177, serine 186, glutamate 263, and tyrosine 275.

This sequence belongs to the argininosuccinate synthase family. Type 1 subfamily. Homotetramer.

The protein resides in the cytoplasm. It carries out the reaction L-citrulline + L-aspartate + ATP = 2-(N(omega)-L-arginino)succinate + AMP + diphosphate + H(+). The protein operates within amino-acid biosynthesis; L-arginine biosynthesis; L-arginine from L-ornithine and carbamoyl phosphate: step 2/3. The polypeptide is Argininosuccinate synthase (Clostridium botulinum (strain Eklund 17B / Type B)).